A 212-amino-acid chain; its full sequence is uncharacterized protein (212 aa).

Positions R47–R129 are disordered.

This is an uncharacterized protein from Caenorhabditis elegans.